The chain runs to 78 residues: Conotoxin CaFr179 (78 aa).

Residues 1–19 form the signal peptide; the sequence is MSGLGIMVLTLLLLVFMEA. Positions 20-44 are excised as a propeptide; that stretch reads SHQDAGEKQATQRDAINVRRRRSLA. 3 disulfide bridges follow: C52–C64, C56–C72, and C63–C76. F77 is modified (phenylalanine amide).

Belongs to the conotoxin O3 superfamily. As to expression, expressed by the venom duct.

The protein resides in the secreted. This is Conotoxin CaFr179 from Conus caracteristicus (Characteristic cone).